The following is a 259-amino-acid chain: Phosphate import ATP-binding protein PstB 1 (259 aa).

In terms of domain architecture, ABC transporter spans 7–254; it reads VKPEDVYQIN…PDDHRTKDYI (248 aa). 45 to 52 is an ATP binding site; it reads GPSGCGKS.

The protein belongs to the ABC transporter superfamily. Phosphate importer (TC 3.A.1.7) family. In terms of assembly, the complex is composed of two ATP-binding proteins (PstB), two transmembrane proteins (PstC and PstA) and a solute-binding protein (PstS).

The protein localises to the cell membrane. The catalysed reaction is phosphate(out) + ATP + H2O = ADP + 2 phosphate(in) + H(+). Its function is as follows. Part of the ABC transporter complex PstSACB involved in phosphate import. Responsible for energy coupling to the transport system. This is Phosphate import ATP-binding protein PstB 1 from Bacillus licheniformis (strain ATCC 14580 / DSM 13 / JCM 2505 / CCUG 7422 / NBRC 12200 / NCIMB 9375 / NCTC 10341 / NRRL NRS-1264 / Gibson 46).